Consider the following 139-residue polypeptide: Putative nickel-responsive regulator (139 aa).

Residues His-79, His-90, His-92, and Cys-98 each coordinate Ni(2+).

Belongs to the transcriptional regulatory CopG/NikR family. It depends on Ni(2+) as a cofactor.

In terms of biological role, transcriptional regulator. The protein is Putative nickel-responsive regulator of Pelobacter propionicus (strain DSM 2379 / NBRC 103807 / OttBd1).